The chain runs to 433 residues: Histidinol dehydrogenase (433 aa).

Residues Y129, Q191, and N214 each coordinate NAD(+). Positions 237, 259, and 262 each coordinate substrate. Residues Q259 and H262 each contribute to the Zn(2+) site. Catalysis depends on proton acceptor residues E326 and H327. H327, D360, E414, and H419 together coordinate substrate. D360 contributes to the Zn(2+) binding site. Position 419 (H419) interacts with Zn(2+).

This sequence belongs to the histidinol dehydrogenase family. It depends on Zn(2+) as a cofactor.

It carries out the reaction L-histidinol + 2 NAD(+) + H2O = L-histidine + 2 NADH + 3 H(+). It participates in amino-acid biosynthesis; L-histidine biosynthesis; L-histidine from 5-phospho-alpha-D-ribose 1-diphosphate: step 9/9. Its function is as follows. Catalyzes the sequential NAD-dependent oxidations of L-histidinol to L-histidinaldehyde and then to L-histidine. In Methanosarcina mazei (strain ATCC BAA-159 / DSM 3647 / Goe1 / Go1 / JCM 11833 / OCM 88) (Methanosarcina frisia), this protein is Histidinol dehydrogenase.